A 414-amino-acid chain; its full sequence is 3-oxoacyl-[acyl-carrier-protein] synthase 2 (414 aa).

The 408-residue stretch at 4-411 folds into the Ketosynthase family 3 (KS3) domain; the sequence is NKRVVITGMG…GHNAVLVFKK (408 aa). Residues cysteine 165, histidine 304, and histidine 341 each act as for beta-ketoacyl synthase activity in the active site.

It belongs to the thiolase-like superfamily. Beta-ketoacyl-ACP synthases family.

The catalysed reaction is a fatty acyl-[ACP] + malonyl-[ACP] + H(+) = a 3-oxoacyl-[ACP] + holo-[ACP] + CO2. It carries out the reaction (9Z)-hexadecenoyl-[ACP] + malonyl-[ACP] + H(+) = 3-oxo-(11Z)-octadecenoyl-[ACP] + holo-[ACP] + CO2. The protein operates within lipid metabolism; fatty acid biosynthesis. Its function is as follows. Involved in the type II fatty acid elongation cycle. Catalyzes the elongation of a wide range of acyl-ACP by the addition of two carbons from malonyl-ACP to an acyl acceptor. Can efficiently catalyze the conversion of palmitoleoyl-ACP (cis-hexadec-9-enoyl-ACP) to cis-vaccenoyl-ACP (cis-octadec-11-enoyl-ACP), an essential step in the thermal regulation of fatty acid composition. The chain is 3-oxoacyl-[acyl-carrier-protein] synthase 2 (fabF) from Staphylococcus aureus (strain MW2).